The chain runs to 619 residues: 1-deoxy-D-xylulose-5-phosphate synthase (619 aa).

Residues His-63 and 104 to 106 (GHS) contribute to the thiamine diphosphate site. Asp-136 is a Mg(2+) binding site. Thiamine diphosphate contacts are provided by residues 137–138 (GS), Asn-165, Tyr-272, and Glu-353. Asn-165 is a Mg(2+) binding site.

Belongs to the transketolase family. DXPS subfamily. In terms of assembly, homodimer. Requires Mg(2+) as cofactor. Thiamine diphosphate serves as cofactor.

It catalyses the reaction D-glyceraldehyde 3-phosphate + pyruvate + H(+) = 1-deoxy-D-xylulose 5-phosphate + CO2. It functions in the pathway metabolic intermediate biosynthesis; 1-deoxy-D-xylulose 5-phosphate biosynthesis; 1-deoxy-D-xylulose 5-phosphate from D-glyceraldehyde 3-phosphate and pyruvate: step 1/1. In terms of biological role, catalyzes the acyloin condensation reaction between C atoms 2 and 3 of pyruvate and glyceraldehyde 3-phosphate to yield 1-deoxy-D-xylulose-5-phosphate (DXP). The sequence is that of 1-deoxy-D-xylulose-5-phosphate synthase from Wolinella succinogenes (strain ATCC 29543 / DSM 1740 / CCUG 13145 / JCM 31913 / LMG 7466 / NCTC 11488 / FDC 602W) (Vibrio succinogenes).